The following is a 748-amino-acid chain: Catalase-peroxidase (748 aa).

The segment at residues 92–238 (WHSAGTYRTG…LAAVQMGLIY (147 aa)) is a cross-link (tryptophyl-tyrosyl-methioninium (Trp-Tyr) (with M-264)). The Proton acceptor role is filled by His-93. Positions 238 to 264 (YVNPEGPDGNPDPLLAAKDIRDTFGRM) form a cross-link, tryptophyl-tyrosyl-methioninium (Tyr-Met) (with W-92). His-279 contacts heme b.

This sequence belongs to the peroxidase family. Peroxidase/catalase subfamily. In terms of assembly, homodimer or homotetramer. It depends on heme b as a cofactor. Post-translationally, formation of the three residue Trp-Tyr-Met cross-link is important for the catalase, but not the peroxidase activity of the enzyme.

It carries out the reaction H2O2 + AH2 = A + 2 H2O. It catalyses the reaction 2 H2O2 = O2 + 2 H2O. In terms of biological role, bifunctional enzyme with both catalase and broad-spectrum peroxidase activity. This chain is Catalase-peroxidase, found in Xanthomonas campestris pv. campestris (strain 8004).